Consider the following 93-residue polypeptide: Small ribosomal subunit protein uS19 (93 aa).

Belongs to the universal ribosomal protein uS19 family.

Protein S19 forms a complex with S13 that binds strongly to the 16S ribosomal RNA. The polypeptide is Small ribosomal subunit protein uS19 (Alkaliphilus oremlandii (strain OhILAs) (Clostridium oremlandii (strain OhILAs))).